Consider the following 365-residue polypeptide: Putative glutamate--cysteine ligase 2-2 (365 aa).

It belongs to the glutamate--cysteine ligase type 2 family. YbdK subfamily.

It catalyses the reaction L-cysteine + L-glutamate + ATP = gamma-L-glutamyl-L-cysteine + ADP + phosphate + H(+). In terms of biological role, ATP-dependent carboxylate-amine ligase which exhibits weak glutamate--cysteine ligase activity. In Mycolicibacterium vanbaalenii (strain DSM 7251 / JCM 13017 / BCRC 16820 / KCTC 9966 / NRRL B-24157 / PYR-1) (Mycobacterium vanbaalenii), this protein is Putative glutamate--cysteine ligase 2-2.